Here is a 218-residue protein sequence, read N- to C-terminus: Deoxyribose-phosphate aldolase (218 aa).

Aspartate 89 functions as the Proton donor/acceptor in the catalytic mechanism. Lysine 152 acts as the Schiff-base intermediate with acetaldehyde in catalysis. The active-site Proton donor/acceptor is lysine 182.

This sequence belongs to the DeoC/FbaB aldolase family. DeoC type 1 subfamily.

It is found in the cytoplasm. The enzyme catalyses 2-deoxy-D-ribose 5-phosphate = D-glyceraldehyde 3-phosphate + acetaldehyde. It functions in the pathway carbohydrate degradation; 2-deoxy-D-ribose 1-phosphate degradation; D-glyceraldehyde 3-phosphate and acetaldehyde from 2-deoxy-alpha-D-ribose 1-phosphate: step 2/2. Functionally, catalyzes a reversible aldol reaction between acetaldehyde and D-glyceraldehyde 3-phosphate to generate 2-deoxy-D-ribose 5-phosphate. This Kocuria rhizophila (strain ATCC 9341 / DSM 348 / NBRC 103217 / DC2201) protein is Deoxyribose-phosphate aldolase.